Consider the following 258-residue polypeptide: MSFSSSALVFLVAGIYMSSESFHTEIIGGREVQPHSRPFMASIQYRGKHICGGVLIHPQWVLTAAHCYSRGHSPTVVLGAHSLSKNEPMKQTFEIKEFIPFSGFKSGTNDIMLIKLRTAAELNKHVQLLHLRSKNYIRDGTKCQVTGWGSTKPDVLTTSDTLQEVTVTIISRKRCNSQSYYNHKPVITKDMICAGDRRGEKDSCKGDSGGPLICKGVFHALVSGGYKCGISNKPGVYTLLTKKYQTWIKSKLAPSSAH.

Positions methionine 1–histidine 23 are cleaved as a signal peptide. Residues threonine 24 to glutamate 25 constitute a propeptide, activation peptide. Residues isoleucine 26–alanine 253 enclose the Peptidase S1 domain. A disulfide bridge links cysteine 51 with cysteine 67. Residues histidine 66 and aspartate 110 each act as charge relay system in the active site. Intrachain disulfides connect cysteine 143–cysteine 214, cysteine 175–cysteine 193, and cysteine 204–cysteine 228. Serine 208 functions as the Charge relay system in the catalytic mechanism.

It belongs to the peptidase S1 family. Granzyme subfamily. In terms of tissue distribution, speen, lungs and liver non-parenchymal cells.

Its subcellular location is the cytoplasmic granule. In Rattus norvegicus (Rat), this protein is Granzyme K (Gzmk).